A 1358-amino-acid chain; its full sequence is DNA mismatch repair protein Msh6 (1358 aa).

The disordered stretch occupies residues 1 to 87 (MSRQSTLYSF…SSAQAVPPSS (87 aa)). Ser14, Ser38, and Ser40 each carry phosphoserine. Residues 25 to 46 (AEASRQGAAASGASASRGGDAA) show a composition bias toward low complexity. Lys67 carries the post-translational modification N6-acetyllysine. A compositionally biased stretch (low complexity) spans 76 to 87 (ASSSAQAVPPSS). Phosphoserine occurs at positions 91, 137, 200, 219, and 227. Positions 92-154 (PGDLVWAKME…KRMLKPYTGS (63 aa)) constitute a PWWP domain. A disordered region spans residues 197–360 (DEPSEPEEEE…VSGGGNDSSG (164 aa)). Acidic residues-rich tracts occupy residues 198–209 (EPSEPEEEEETE) and 219–231 (SEED…EEEA). Basic residues predominate over residues 240–249 (RSSRQVKKRR). Ser252, Ser254, Ser256, and Ser261 each carry phosphoserine. The segment covering 263-273 (VEFKPDTKQEG) has biased composition (basic and acidic residues). At Thr269 the chain carries Phosphothreonine. Ser274, Ser275, Ser279, and Ser280 each carry phosphoserine. Positions 329 to 351 (LSETKSTLSAFSAPQNSESQTHV) are enriched in polar residues. The residue at position 487 (Thr487) is a Phosphothreonine. Residue Lys503 is modified to N6-acetyllysine. Residues Ser827 and Ser932 each carry the phosphoserine modification. Thr1007 bears the Phosphothreonine mark. Residue 1132–1139 (GPNMGGKS) participates in ATP binding.

The protein belongs to the DNA mismatch repair MutS family. As to quaternary structure, component of the DNA mismatch repair (MMR) complex composed at least of MSH2, MSH3, MSH6, PMS1 and MLH1. Heterodimer consisting of MSH2-MSH6 (MutS alpha). Forms a ternary complex with MutL alpha (MLH1-PMS1). Interacts with MCM9. Part of the BRCA1-associated genome surveillance complex (BASC), which contains BRCA1, MSH2, MSH6, MLH1, ATM, BLM, PMS2 and the RAD50-MRE11-NBS1 protein complex. This association could be a dynamic process changing throughout the cell cycle and within subnuclear domains. Phosphorylated by PRKCZ, which may prevent MutS alpha degradation by the ubiquitin-proteasome pathway.

It localises to the nucleus. It is found in the chromosome. Its function is as follows. Component of the post-replicative DNA mismatch repair system (MMR). Heterodimerizes with MSH2 to form MutS alpha, which binds to DNA mismatches thereby initiating DNA repair. When bound, MutS alpha bends the DNA helix and shields approximately 20 base pairs, and recognizes single base mismatches and dinucleotide insertion-deletion loops (IDL) in the DNA. After mismatch binding, forms a ternary complex with the MutL alpha heterodimer, which is thought to be responsible for directing the downstream MMR events, including strand discrimination, excision, and resynthesis. ATP binding and hydrolysis play a pivotal role in mismatch repair functions. The ATPase activity associated with MutS alpha regulates binding similar to a molecular switch: mismatched DNA provokes ADP--&gt;ATP exchange, resulting in a discernible conformational transition that converts MutS alpha into a sliding clamp capable of hydrolysis-independent diffusion along the DNA backbone. This transition is crucial for mismatch repair. MutS alpha may also play a role in DNA homologous recombination repair. Recruited on chromatin in G1 and early S phase via its PWWP domain that specifically binds trimethylated 'Lys-36' of histone H3 (H3K36me3): early recruitment to chromatin to be replicated allowing a quick identification of mismatch repair to initiate the DNA mismatch repair reaction. In Mus musculus (Mouse), this protein is DNA mismatch repair protein Msh6.